We begin with the raw amino-acid sequence, 283 residues long: DegV domain-containing protein lmo2514 (283 aa).

The DegV domain occupies 5–282 (IAVVTDSTTY…EGALGLTWSI (278 aa)). 2 residues coordinate hexadecanoate: Ser63 and Ser96.

Its function is as follows. May bind long-chain fatty acids, such as palmitate, and may play a role in lipid transport or fatty acid metabolism. The chain is DegV domain-containing protein lmo2514 from Listeria monocytogenes serovar 1/2a (strain ATCC BAA-679 / EGD-e).